Consider the following 339-residue polypeptide: Acyl-CoA dehydrogenase FadE28 (339 aa).

Residues R227, Q238, H295, and G299 each coordinate FAD.

Belongs to the acyl-CoA dehydrogenase family. As to quaternary structure, heterotetramer composed of FadE28 and FadE29. Requires FAD as cofactor.

The catalysed reaction is 3-oxochol-4-en-22-oyl-CoA + A = 3-oxochola-4,17-dien-22-oyl-CoA + AH2. Its pathway is steroid metabolism; cholesterol degradation. Involved in the third cycle of side chain dehydrogenation in the beta-oxidation of cholesterol catabolism. May play an important role for the initial macrophage invasion, possibly in response to the acidification of phagosome. It contributes partly to the virulence by increasing the efficiency of beta-oxidation. Catalyzes the dehydrogenation of 2'-propanoyl-CoA ester side chains of 3-oxo-4-pregnene-20-carboxyl-CoA (3-OPC-CoA) to yield 3-oxo-4,17-pregnadiene-20-carboxyl-CoA (3-OPDC-CoA). Also able to dehydrogenate steroyl-CoA such as 3-oxo-chol-4-en-24-oyl-CoA (3-OCO-CoA), 1beta-(2'-propanoyl-CoA)-3a-alpha-H-7a-beta-methylhexahydro-4-indanone (indanone-CoA ester), hexahydroindanone and pregenenone. This chain is Acyl-CoA dehydrogenase FadE28 (fadE28), found in Mycobacterium tuberculosis (strain ATCC 25618 / H37Rv).